The following is a 340-amino-acid chain: Phosphate acyltransferase (340 aa).

Belongs to the PlsX family. In terms of assembly, homodimer. Probably interacts with PlsY.

It is found in the cytoplasm. The catalysed reaction is a fatty acyl-[ACP] + phosphate = an acyl phosphate + holo-[ACP]. The protein operates within lipid metabolism; phospholipid metabolism. In terms of biological role, catalyzes the reversible formation of acyl-phosphate (acyl-PO(4)) from acyl-[acyl-carrier-protein] (acyl-ACP). This enzyme utilizes acyl-ACP as fatty acyl donor, but not acyl-CoA. This chain is Phosphate acyltransferase, found in Nitrosococcus oceani (strain ATCC 19707 / BCRC 17464 / JCM 30415 / NCIMB 11848 / C-107).